The following is a 130-amino-acid chain: Ribosome-binding factor A (130 aa).

The tract at residues 111-130 (RDLDDVGPEATSSDEDAEQR) is disordered.

The protein belongs to the RbfA family. As to quaternary structure, monomer. Binds 30S ribosomal subunits, but not 50S ribosomal subunits or 70S ribosomes.

The protein localises to the cytoplasm. One of several proteins that assist in the late maturation steps of the functional core of the 30S ribosomal subunit. Associates with free 30S ribosomal subunits (but not with 30S subunits that are part of 70S ribosomes or polysomes). Required for efficient processing of 16S rRNA. May interact with the 5'-terminal helix region of 16S rRNA. The protein is Ribosome-binding factor A of Xanthomonas axonopodis pv. citri (strain 306).